The primary structure comprises 237 residues: Ribose-5-phosphate isomerase A (237 aa).

Substrate is bound by residues 30–33 (SGST), 87–90 (DGAD), and 100–103 (KGGG). The active-site Proton acceptor is glutamate 109. Lysine 127 provides a ligand contact to substrate.

It belongs to the ribose 5-phosphate isomerase family. In terms of assembly, homodimer.

The catalysed reaction is aldehydo-D-ribose 5-phosphate = D-ribulose 5-phosphate. It participates in carbohydrate degradation; pentose phosphate pathway; D-ribose 5-phosphate from D-ribulose 5-phosphate (non-oxidative stage): step 1/1. Catalyzes the reversible conversion of ribose-5-phosphate to ribulose 5-phosphate. This is Ribose-5-phosphate isomerase A from Synechococcus sp. (strain RCC307).